The primary structure comprises 151 residues: Methylglyoxal synthase (151 aa).

Residues 6–151 (RTMPAHKHVA…DYEAYLAERM (146 aa)) enclose the MGS-like domain. Substrate is bound by residues histidine 19, lysine 23, 45–48 (TGTT), and 65–66 (SG). The Proton donor/acceptor role is filled by aspartate 71. Histidine 98 contributes to the substrate binding site.

It belongs to the methylglyoxal synthase family.

The catalysed reaction is dihydroxyacetone phosphate = methylglyoxal + phosphate. In terms of biological role, catalyzes the formation of methylglyoxal from dihydroxyacetone phosphate. The sequence is that of Methylglyoxal synthase from Vibrio parahaemolyticus serotype O3:K6 (strain RIMD 2210633).